A 494-amino-acid polypeptide reads, in one-letter code: Leucine-rich repeat extensin-like protein 4 (494 aa).

Positions 1–25 are cleaved as a signal peptide; that stretch reads MKNNTTQSLLLLLLFFFFFFEISHS. N-linked (GlcNAc...) asparagine glycosylation is found at Asn-60, Asn-94, and Asn-106. 9 LRR repeats span residues 121–145, 146–168, 169–193, 194–217, 219–240, 242–263, 264–287, 289–311, and 312–335; these read IRTV…LGLL, TDLA…KFKQ, LKLL…VLHL, PSLK…LFSK, LDAI…FGDS, VSVI…LVEM, KNLN…IGRL, NVTV…VGGM, and VEVE…ICQL. The N-linked (GlcNAc...) asparagine glycan is linked to Asn-289. Asn-340 carries an N-linked (GlcNAc...) asparagine glycan. A contains the Ser-Pro(4) repeats region spans residues 404–494; that stretch reads SPPIVALPPP…YASPPPPPFY (91 aa). Positions 422 to 479 are enriched in pro residues; that stretch reads PPVYSPPPSPPVFSPPPSPPVYSPPPPPSIHYSSPPPPPVHHSSPPPPSPEFEGPLPP. The segment at 422-482 is disordered; that stretch reads PPVYSPPPSP…FEGPLPPVIG (61 aa).

Hydroxylated on proline residues in the S-P-P-P-P repeat. Post-translationally, O-glycosylated on hydroxyprolines. Expressed in roots, stems, leaves and flowers, mostly in vascular tissues.

It is found in the secreted. Its subcellular location is the cell wall. In terms of biological role, modulates cell morphogenesis by regulating cell wall formation and assembly, and/or growth polarization. In Arabidopsis thaliana (Mouse-ear cress), this protein is Leucine-rich repeat extensin-like protein 4 (LRX4).